A 417-amino-acid chain; its full sequence is Serine/threonine-protein phosphatase 4 regulatory subunit 2 (417 aa).

A disordered region spans residues 141-417; sequence KNNSNSLNRM…EVTDDPMEQD (277 aa). Composition is skewed to polar residues over residues 158-170 and 186-196; these read NSPNYTDRSNING and APLTTNGLPES. The residue at position 159 (serine 159) is a Phosphoserine. Residues 197 to 213 show a composition bias toward basic and acidic residues; that stretch reads TDSKDSELQLSEEKGHS. The span at 214–226 shows a compositional bias: low complexity; that stretch reads DSSASESEVSLLS. Serine 226 is modified (phosphoserine). Residues 243–258 are compositionally biased toward basic and acidic residues; it reads HEVKRLKFDKEGDVRE. Polar residues predominate over residues 259–268; the sequence is TASQTVSGEV. Over residues 283–296 the composition is skewed to basic and acidic residues; that stretch reads PDKDRESRTRQHCT. The span at 297-313 shows a compositional bias: acidic residues; sequence EEEEEEEEEEEEEEEES. Over residues 320–329 the composition is skewed to basic and acidic residues; sequence MVPERKNQEK. A compositionally biased stretch (low complexity) spans 367 to 376; sequence SAGASRSGSD. Positions 378–392 are enriched in polar residues; the sequence is LETQESGGPPSSKTG. The segment covering 402–417 has biased composition (acidic residues); that stretch reads ESEEATEVTDDPMEQD.

The protein belongs to the PPP4R2 family. Serine/threonine-protein phosphatase 4 (PP4) occurs in different assemblies of the catalytic and one or more regulatory subunits. Component of the PP4 complexes PPP4C-PPP4R2, PPP4C-PPP4R2-PPP4R3A and PPP4C-PPP4R2-PPP4R3B. The PPP4C-PPP4R2 complex appears to be a tetramer composed of 2 molecules of PPP4C and 2 molecules of PPP4R2. Interacts with DDX20/GEMIN3 and GEMIN4. Interacts with RPA2; this DNA damage-dependent interaction recruits PPP4C leading to RPA2 dephosphorylation.

It localises to the cytoplasm. Its subcellular location is the cytoskeleton. The protein localises to the microtubule organizing center. It is found in the centrosome. The protein resides in the nucleus. Regulatory subunit of serine/threonine-protein phosphatase 4 (PP4). May regulate the activity of PPP4C at centrosomal microtubule organizing centers. Its interaction with the SMN complex leads to enhance the temporal localization of snRNPs, suggesting a role of PPP4C in maturation of spliceosomal snRNPs. The PPP4C-PPP4R2-PPP4R3A PP4 complex specifically dephosphorylates H2AX phosphorylated on 'Ser-140' (gamma-H2AX) generated during DNA replication and required for DNA double strand break repair. Mediates RPA2 dephosphorylation by recruiting PPP4C to RPA2 in a DNA damage-dependent manner. RPA2 dephosphorylation is required for the efficient RPA2-mediated recruitment of RAD51 to chromatin following double strand breaks, an essential step for DNA repair. The chain is Serine/threonine-protein phosphatase 4 regulatory subunit 2 (Ppp4r2) from Mus musculus (Mouse).